The primary structure comprises 233 residues: Archaetidylserine synthase (233 aa).

8 consecutive transmembrane segments (helical) span residues 7-27 (ITSF…SGYL), 29-49 (ILLS…LAVL), 75-95 (SLSD…SAAV), 102-122 (ILVG…FNVL), 126-146 (GKNF…SFYL), 147-167 (TGFY…VLMI), 180-200 (ASTA…VEIL), and 206-226 (VAGP…AVPI).

The protein belongs to the CDP-alcohol phosphatidyltransferase class-I family.

Its subcellular location is the membrane. It catalyses the reaction CDP-2,3-bis-O-(geranylgeranyl)-sn-glycerol + L-serine = archaetidylserine + CMP + H(+). The enzyme catalyses CDP-2,3-bis-O-(phytanyl)-sn-glycerol + L-serine = 2,3-bis-O-phytanyl-sn-glycero-3-phospho-L-serine + CMP + H(+). Its pathway is membrane lipid metabolism; glycerophospholipid metabolism. Activated by Mn(2+) ions. Involved in the lipid biosynthesis. Catalyzes the formation of unsaturated archaetidylserine from CDP-unsaturated archaeol and L-serine. Activity with ester-linked substrate analogs containing straight aliphatic chains (typical bacterial substrates) is two to three times higher than that with the corresponding ether-type substrate (typical archaeal substrates). Both enantiomers of CDP-unsaturated archaeols with ether-linked geranylgeranyl chains and CDP-saturated archaeol with ether-linked phytanyl chains are similarly active. The enzyme also accepts D-serine, although activity is only about third of that with L-serine. The sequence is that of Archaetidylserine synthase from Methanothermobacter thermautotrophicus (strain ATCC 29096 / DSM 1053 / JCM 10044 / NBRC 100330 / Delta H) (Methanobacterium thermoautotrophicum).